The following is a 249-amino-acid chain: UPF0758 protein BMEI0718 (249 aa).

Residues 1-34 (MAKKKDTPGDGEFPGFSDTLQRTPKLEKPHYAGH) are disordered. Positions 24–34 (PKLEKPHYAGH) are enriched in basic and acidic residues. Positions 127–249 (VLGSWDKVIN…HASLRSLRLI (123 aa)) constitute an MPN domain. The Zn(2+) site is built by H198, H200, and D211. The JAMM motif signature appears at 198 to 211 (HNHPSGDPTPSRAD).

This sequence belongs to the UPF0758 family.

This Brucella melitensis biotype 1 (strain ATCC 23456 / CCUG 17765 / NCTC 10094 / 16M) protein is UPF0758 protein BMEI0718.